The sequence spans 267 residues: Hydroxynaphthalene reductase-like protein Arp2 (267 aa).

The NADP(+) site is built by Ile-25, Asn-45, Asp-71, and Asn-98. Active-site proton donor residues include Ser-147 and Ser-148. The NADP(+) site is built by Tyr-162, Lys-166, Val-195, and Thr-197. The active-site Proton acceptor is the Tyr-162. Lys-166 acts as the Lowers pKa of active site Tyr in catalysis.

This sequence belongs to the short-chain dehydrogenases/reductases (SDR) family.

Its function is as follows. Hydroxynaphthalene reductase-like protein; part of the Pks2 gene cluster that mediates the formation of infectious structures (appressoria), enabling these fungi to kill insects faster. The product of the Pks2 gene cluster is different from the one of Pks1 and has still not been identified. This is Hydroxynaphthalene reductase-like protein Arp2 from Metarhizium guizhouense (strain ARSEF 977).